The primary structure comprises 456 residues: Bifunctional protein GlmU (456 aa).

The interval 1-228 (MSARLAAIVL…PQEIFGINDR (228 aa)) is pyrophosphorylase. UDP-N-acetyl-alpha-D-glucosamine is bound by residues 10–13 (LAAG), K24, Q75, and 80–81 (GT). Mg(2+) is bound at residue D105. G142, E157, N172, and N226 together coordinate UDP-N-acetyl-alpha-D-glucosamine. A Mg(2+)-binding site is contributed by N226. A linker region spans residues 229–249 (LQLSQASRILNERTLVGLMLS). The interval 250–456 (GVTIVDPLRV…KAPYERTEDG (207 aa)) is N-acetyltransferase. Residues R331 and K349 each coordinate UDP-N-acetyl-alpha-D-glucosamine. The active-site Proton acceptor is H361. UDP-N-acetyl-alpha-D-glucosamine is bound by residues Y364 and N375. Residues A378, 384–385 (NY), A421, and R437 each bind acetyl-CoA.

In the N-terminal section; belongs to the N-acetylglucosamine-1-phosphate uridyltransferase family. The protein in the C-terminal section; belongs to the transferase hexapeptide repeat family. In terms of assembly, homotrimer. It depends on Mg(2+) as a cofactor.

The protein resides in the cytoplasm. It carries out the reaction alpha-D-glucosamine 1-phosphate + acetyl-CoA = N-acetyl-alpha-D-glucosamine 1-phosphate + CoA + H(+). The enzyme catalyses N-acetyl-alpha-D-glucosamine 1-phosphate + UTP + H(+) = UDP-N-acetyl-alpha-D-glucosamine + diphosphate. It participates in nucleotide-sugar biosynthesis; UDP-N-acetyl-alpha-D-glucosamine biosynthesis; N-acetyl-alpha-D-glucosamine 1-phosphate from alpha-D-glucosamine 6-phosphate (route II): step 2/2. Its pathway is nucleotide-sugar biosynthesis; UDP-N-acetyl-alpha-D-glucosamine biosynthesis; UDP-N-acetyl-alpha-D-glucosamine from N-acetyl-alpha-D-glucosamine 1-phosphate: step 1/1. It functions in the pathway bacterial outer membrane biogenesis; LPS lipid A biosynthesis. Its function is as follows. Catalyzes the last two sequential reactions in the de novo biosynthetic pathway for UDP-N-acetylglucosamine (UDP-GlcNAc). The C-terminal domain catalyzes the transfer of acetyl group from acetyl coenzyme A to glucosamine-1-phosphate (GlcN-1-P) to produce N-acetylglucosamine-1-phosphate (GlcNAc-1-P), which is converted into UDP-GlcNAc by the transfer of uridine 5-monophosphate (from uridine 5-triphosphate), a reaction catalyzed by the N-terminal domain. This Gloeobacter violaceus (strain ATCC 29082 / PCC 7421) protein is Bifunctional protein GlmU.